The following is a 571-amino-acid chain: Proline--tRNA ligase (571 aa).

It belongs to the class-II aminoacyl-tRNA synthetase family. ProS type 1 subfamily. As to quaternary structure, homodimer.

It is found in the cytoplasm. It carries out the reaction tRNA(Pro) + L-proline + ATP = L-prolyl-tRNA(Pro) + AMP + diphosphate. Functionally, catalyzes the attachment of proline to tRNA(Pro) in a two-step reaction: proline is first activated by ATP to form Pro-AMP and then transferred to the acceptor end of tRNA(Pro). As ProRS can inadvertently accommodate and process non-cognate amino acids such as alanine and cysteine, to avoid such errors it has two additional distinct editing activities against alanine. One activity is designated as 'pretransfer' editing and involves the tRNA(Pro)-independent hydrolysis of activated Ala-AMP. The other activity is designated 'posttransfer' editing and involves deacylation of mischarged Ala-tRNA(Pro). The misacylated Cys-tRNA(Pro) is not edited by ProRS. This Shewanella baltica (strain OS185) protein is Proline--tRNA ligase.